A 194-amino-acid chain; its full sequence is Dephospho-CoA kinase (194 aa).

The DPCK domain occupies 4-194 (VIGLTGSIGM…VKEILQKLGA (191 aa)). 12 to 17 (GMGKTT) lines the ATP pocket.

This sequence belongs to the CoaE family.

Its subcellular location is the cytoplasm. It carries out the reaction 3'-dephospho-CoA + ATP = ADP + CoA + H(+). The protein operates within cofactor biosynthesis; coenzyme A biosynthesis; CoA from (R)-pantothenate: step 5/5. In terms of biological role, catalyzes the phosphorylation of the 3'-hydroxyl group of dephosphocoenzyme A to form coenzyme A. The chain is Dephospho-CoA kinase from Agrobacterium fabrum (strain C58 / ATCC 33970) (Agrobacterium tumefaciens (strain C58)).